The sequence spans 201 residues: Recombination protein RecR (201 aa).

The segment at 60-75 (CSRCGNVDTVDPCIVC) adopts a C4-type zinc-finger fold. The Toprim domain maps to 83 to 178 (SVIIVVEDVS…KITRLAHGVP (96 aa)).

The protein belongs to the RecR family.

In terms of biological role, may play a role in DNA repair. It seems to be involved in an RecBC-independent recombinational process of DNA repair. It may act with RecF and RecO. This is Recombination protein RecR from Rhizobium johnstonii (strain DSM 114642 / LMG 32736 / 3841) (Rhizobium leguminosarum bv. viciae).